A 1538-amino-acid polypeptide reads, in one-letter code: Phenolphthiocerol/phthiocerol polyketide synthase subunit B (1538 aa).

The 423-residue stretch at 33-455 (AEPVAVVGIG…GTNAHVIIEQ (423 aa)) folds into the Ketosynthase family 3 (KS3) domain. Catalysis depends on for beta-ketoacyl synthase activity residues cysteine 205, histidine 340, and histidine 377. The segment at 553-882 (DGSPGPGTVF…TNLYTADIAH (330 aa)) is acyltransferase. Serine 649 functions as the For malonyltransferase activity in the catalytic mechanism. 1153-1196 (SQLVIGATGNIGPHLIRQLARMGAKTIVAMARKPGALDELTQCL) provides a ligand contact to NADP(+). The tract at residues 1153–1328 (SQLVIGATGN…TVVDWGLWKS (176 aa)) is beta-ketoacyl reductase. A Carrier domain is found at 1423-1498 (DMLFDHVGAL…SLTDYLATVL (76 aa)). The residue at position 1458 (serine 1458) is an O-(pantetheine 4'-phosphoryl)serine.

NADP(+) serves as cofactor. The cofactor is pantetheine 4'-phosphate.

It carries out the reaction icosanoyl-[(phenol)carboxyphthiodiolenone synthase] + 2 (S)-methylmalonyl-CoA + 3 malonyl-CoA + 5 NADPH + 10 H(+) = C32-carboxyphthiodiolenone-[(phenol)carboxyphthiodiolenone synthase] + 5 CO2 + 5 NADP(+) + 5 CoA + 2 H2O. It catalyses the reaction docosanoyl-[(phenol)carboxyphthiodiolenone synthase] + 2 (S)-methylmalonyl-CoA + 3 malonyl-CoA + 5 NADPH + 10 H(+) = C34-carboxyphthiodiolenone-[(phenol)carboxyphthiodiolenone synthase] + 5 CO2 + 5 NADP(+) + 5 CoA + 2 H2O. The enzyme catalyses 17-(4-hydroxyphenyl)heptadecanoyl-[(phenol)carboxyphthiodiolenone synthase] + 2 (S)-methylmalonyl-CoA + 3 malonyl-CoA + 5 NADPH + 10 H(+) = C35-(phenol)carboxyphthiodiolenone-[(phenol)carboxyphthiodiolenone synthase] + 5 CO2 + 5 NADP(+) + 5 CoA + 2 H2O. The catalysed reaction is 19-(4-hydroxyphenyl)nonadecanoyl-[(phenol)carboxyphthiodiolenone synthase] + 2 (S)-methylmalonyl-CoA + 3 malonyl-CoA + 5 NADPH + 10 H(+) = C37-(phenol)carboxyphthiodiolenone-[(phenol)carboxyphthiodiolenone synthase] + 5 CO2 + 5 NADP(+) + 5 CoA + 2 H2O. The protein operates within lipid metabolism; fatty acid biosynthesis. Its function is as follows. Part of the PpsABCDE complex involved in the biosynthesis of the lipid core common to phthiocerols and phenolphthiocerols by successive additions of malonyl-CoA or methylmalonyl-CoA extender units. PpsA can accept as substrate the activated forms of either icosanoyl (C20), docosanoyl (C22) or lignoceroyl (C24) groups from FadD26, or a (4-hydroxyphenyl)-C17 or (4-hydroxyphenyl)-C19 fatty acyl from FadD29. PpsA initiates the biosynthesis and extends its substrate using a malonyl-CoA extender unit. The PpsB and PpsC proteins add the second and third malonyl-CoA extender units. PpsD adds an (R)-methylmalonyl unit and PpsE adds a second (R)-methylmalonyl unit. The incorporation of the methylmalonyl units results in formation of two branched methyl groups in the elongated product. This is Phenolphthiocerol/phthiocerol polyketide synthase subunit B (ppsB) from Mycobacterium bovis (strain ATCC BAA-935 / AF2122/97).